The sequence spans 30 residues: AGTEIVTCYNAGTKVPRGPSAXGGAIDFFN.

Displays antifungal activity against M.arachidicola and P.piricola, but not against R.solani, C.gossypii and C.comatus. Inhibits mycelial growth in P.piricola with an IC(50) of 70 nM. Displays very low cell-free translation inhibitory activity in a rabbit reticulocyte lysate system (IC(50)=70 uM) but is able to inhibit HIV-1 reverse transcriptase activity (IC(50)=5.2 nM). The chain is Antifungal protein Lap from Lyophyllum shimeji (Hon-shimeji).